The chain runs to 330 residues: MRVFIDKLKDKQDLSFAESKNAFEILMNGKASDDEIFDFLTLLSSKGESSDEIAGGVFVLRDKSKRVNVDDCIDTCGTGGDGMNTLNISTASALLLSSMGIKVAKHGNKAVSSKCGSGDVLEALNIKIDLEPKDIEEQIKKNNFGFMFAPNYHSAMRFVGPTRKKIGKRTIFNMIGPLSSPALVDRQVIGVFDKKLLKIFANALNNLDIKFAWIVNSEDGLDEISPYSKTNVVQLKDGKISEMLIDPIKLNIGANKFENLLGDDAKFNANKMLDIFKGEDNDFSKAVCLNAAAGLIVSEKYTIFIDAYNEARTHILSGKTYNDLKEIQNV.

5-phospho-alpha-D-ribose 1-diphosphate contacts are provided by residues Gly-77, 80-81 (GD), Thr-85, 87-90 (NIST), 105-113 (KHGNKAVSS), and Ser-117. Position 77 (Gly-77) interacts with anthranilate. Ser-89 is a binding site for Mg(2+). Asn-108 contacts anthranilate. Arg-163 contributes to the anthranilate binding site. Mg(2+) contacts are provided by Asp-222 and Glu-223.

This sequence belongs to the anthranilate phosphoribosyltransferase family. In terms of assembly, homodimer. The cofactor is Mg(2+).

It carries out the reaction N-(5-phospho-beta-D-ribosyl)anthranilate + diphosphate = 5-phospho-alpha-D-ribose 1-diphosphate + anthranilate. It participates in amino-acid biosynthesis; L-tryptophan biosynthesis; L-tryptophan from chorismate: step 2/5. Functionally, catalyzes the transfer of the phosphoribosyl group of 5-phosphorylribose-1-pyrophosphate (PRPP) to anthranilate to yield N-(5'-phosphoribosyl)-anthranilate (PRA). This chain is Anthranilate phosphoribosyltransferase, found in Pelagibacter ubique (strain HTCC1062).